Consider the following 278-residue polypeptide: Thiazole synthase (278 aa).

K109 serves as the catalytic Schiff-base intermediate with DXP. 1-deoxy-D-xylulose 5-phosphate is bound by residues G170, 197–198 (AG), and 219–220 (NT).

It belongs to the ThiG family. As to quaternary structure, homotetramer. Forms heterodimers with either ThiH or ThiS.

Its subcellular location is the cytoplasm. The enzyme catalyses [ThiS sulfur-carrier protein]-C-terminal-Gly-aminoethanethioate + 2-iminoacetate + 1-deoxy-D-xylulose 5-phosphate = [ThiS sulfur-carrier protein]-C-terminal Gly-Gly + 2-[(2R,5Z)-2-carboxy-4-methylthiazol-5(2H)-ylidene]ethyl phosphate + 2 H2O + H(+). Its pathway is cofactor biosynthesis; thiamine diphosphate biosynthesis. Catalyzes the rearrangement of 1-deoxy-D-xylulose 5-phosphate (DXP) to produce the thiazole phosphate moiety of thiamine. Sulfur is provided by the thiocarboxylate moiety of the carrier protein ThiS. In vitro, sulfur can be provided by H(2)S. In Cupriavidus pinatubonensis (strain JMP 134 / LMG 1197) (Cupriavidus necator (strain JMP 134)), this protein is Thiazole synthase.